The following is a 99-amino-acid chain: NADH dehydrogenase [ubiquinone] 1 alpha subcomplex subunit 2 (99 aa).

A2 is modified (N-acetylalanine). Residues C24 and C58 are joined by a disulfide bond. K64 carries the post-translational modification N6-acetyllysine; alternate. K64 bears the N6-succinyllysine; alternate mark.

This sequence belongs to the complex I NDUFA2 subunit family. Complex I is composed of 45 different subunits.

It is found in the mitochondrion inner membrane. In terms of biological role, accessory subunit of the mitochondrial membrane respiratory chain NADH dehydrogenase (Complex I), that is believed not to be involved in catalysis. Complex I functions in the transfer of electrons from NADH to the respiratory chain. The immediate electron acceptor for the enzyme is believed to be ubiquinone. The chain is NADH dehydrogenase [ubiquinone] 1 alpha subcomplex subunit 2 (NDUFA2) from Homo sapiens (Human).